We begin with the raw amino-acid sequence, 445 residues long: Phosphoglucosamine mutase (445 aa).

Ser-102 functions as the Phosphoserine intermediate in the catalytic mechanism. 4 residues coordinate Mg(2+): Ser-102, Asp-241, Asp-243, and Asp-245. Ser-102 carries the phosphoserine modification.

It belongs to the phosphohexose mutase family. The cofactor is Mg(2+). In terms of processing, activated by phosphorylation.

The enzyme catalyses alpha-D-glucosamine 1-phosphate = D-glucosamine 6-phosphate. Its function is as follows. Catalyzes the conversion of glucosamine-6-phosphate to glucosamine-1-phosphate. The protein is Phosphoglucosamine mutase of Aliivibrio fischeri (strain MJ11) (Vibrio fischeri).